The sequence spans 171 residues: 3-hydroxydecanoyl-[acyl-carrier-protein] dehydratase (171 aa).

The active site involves His-70.

This sequence belongs to the thioester dehydratase family. FabA subfamily. In terms of assembly, homodimer.

It localises to the cytoplasm. The enzyme catalyses a (3R)-hydroxyacyl-[ACP] = a (2E)-enoyl-[ACP] + H2O. It catalyses the reaction (3R)-hydroxydecanoyl-[ACP] = (2E)-decenoyl-[ACP] + H2O. The catalysed reaction is (2E)-decenoyl-[ACP] = (3Z)-decenoyl-[ACP]. It functions in the pathway lipid metabolism; fatty acid biosynthesis. In terms of biological role, necessary for the introduction of cis unsaturation into fatty acids. Catalyzes the dehydration of (3R)-3-hydroxydecanoyl-ACP to E-(2)-decenoyl-ACP and then its isomerization to Z-(3)-decenoyl-ACP. Can catalyze the dehydratase reaction for beta-hydroxyacyl-ACPs with saturated chain lengths up to 16:0, being most active on intermediate chain length. The sequence is that of 3-hydroxydecanoyl-[acyl-carrier-protein] dehydratase from Pseudomonas putida (strain W619).